Here is a 168-residue protein sequence, read N- to C-terminus: Xanthine-guanine phosphoribosyltransferase (168 aa).

Residues 46-47 (RG) and 101-109 (DDLVDSGVT) contribute to the 5-phospho-alpha-D-ribose 1-diphosphate site. Residue D102 participates in Mg(2+) binding. Residue D105 coordinates guanine. D105 and V148 together coordinate xanthine. Residues 105–109 (DSGVT) and 147–148 (WV) each bind GMP.

The protein belongs to the purine/pyrimidine phosphoribosyltransferase family. XGPT subfamily. In terms of assembly, homotetramer. Mg(2+) is required as a cofactor.

It is found in the cell inner membrane. It catalyses the reaction GMP + diphosphate = guanine + 5-phospho-alpha-D-ribose 1-diphosphate. The enzyme catalyses XMP + diphosphate = xanthine + 5-phospho-alpha-D-ribose 1-diphosphate. The catalysed reaction is IMP + diphosphate = hypoxanthine + 5-phospho-alpha-D-ribose 1-diphosphate. It functions in the pathway purine metabolism; GMP biosynthesis via salvage pathway; GMP from guanine: step 1/1. It participates in purine metabolism; XMP biosynthesis via salvage pathway; XMP from xanthine: step 1/1. In terms of biological role, purine salvage pathway enzyme that catalyzes the transfer of the ribosyl-5-phosphate group from 5-phospho-alpha-D-ribose 1-diphosphate (PRPP) to the N9 position of the 6-oxopurines guanine and xanthine to form the corresponding ribonucleotides GMP (guanosine 5'-monophosphate) and XMP (xanthosine 5'-monophosphate), with the release of PPi. To a lesser extent, also acts on hypoxanthine. This Gluconobacter oxydans (strain 621H) (Gluconobacter suboxydans) protein is Xanthine-guanine phosphoribosyltransferase.